Consider the following 127-residue polypeptide: Classical arabinogalactan protein 10 (127 aa).

Residues 1–21 form the signal peptide; the sequence is MASKSVVVLLFLALIASSAIA. Gln22 carries the post-translational modification Pyrrolidone carboxylic acid. Residues 22 to 107 form a disordered region; sequence QAPGPAPTRS…TGSTPVDNNN (86 aa). Residues Pro24, Pro26, Pro28, Pro32, and Pro36 each carry the 4-hydroxyproline modification. Residues Pro24, Pro26, Pro28, Pro32, and Pro36 are each glycosylated (O-linked (Ara...) hydroxyproline). 3 stretches are compositionally biased toward pro residues: residues 25-39, 48-58, and 66-86; these read GPAPTRSPLPSPAQP, SITPTPTPTPS, and VSPPAGSPLPSSASPPAPPTS. Residues 98 to 107 show a composition bias toward polar residues; it reads TGSTPVDNNN. Asn107 carries the GPI-anchor amidated asparagine lipid modification. A propeptide spans 108 to 127 (removed in mature form); it reads AATLAAGSLAGFVFVASLLL.

This sequence belongs to the classical AGP family. In terms of processing, O-glycosylated on hydroxyprolines; noncontiguous hydroxylproline residues are glycosylated with arabinogalactan. As to expression, predominantly expressed in flowers and at a lower level in roots and siliques.

Its subcellular location is the cell membrane. In terms of biological role, proteoglycan that seems to be implicated in diverse developmental roles such as differentiation, cell-cell recognition, embryogenesis and programmed cell death. The sequence is that of Classical arabinogalactan protein 10 (AGP10) from Arabidopsis thaliana (Mouse-ear cress).